A 66-amino-acid polypeptide reads, in one-letter code: Cytochrome c oxidase polypeptide VIII, mitochondrial (66 aa).

Residues 1-17 constitute a mitochondrion transit peptide; that stretch reads MLRYSLQARSALRGVRF. Residues 18–38 are Mitochondrial matrix-facing; it reads SSSHSAPKPGSTIPFYINKKP. Residues 39–59 traverse the membrane as a helical segment; that stretch reads LPTLLYFGTFGVIFSIPFIVV. The Mitochondrial intermembrane segment spans residues 60 to 66; that stretch reads KYHNRNL.

This sequence belongs to the cytochrome c oxidase VIIc family. Component of the cytochrome c oxidase (complex IV, CIV), a multisubunit enzyme composed of a catalytic core of 3 subunits and several supernumerary subunits. The complex exists as a monomer or a dimer and forms supercomplexes (SCs) in the inner mitochondrial membrane with ubiquinol-cytochrome c oxidoreductase (cytochrome b-c1 complex, complex III, CIII).

It is found in the mitochondrion inner membrane. It participates in energy metabolism; oxidative phosphorylation. Component of the cytochrome c oxidase, the last enzyme in the mitochondrial electron transport chain which drives oxidative phosphorylation. The respiratory chain contains 3 multisubunit complexes succinate dehydrogenase (complex II, CII), ubiquinol-cytochrome c oxidoreductase (cytochrome b-c1 complex, complex III, CIII) and cytochrome c oxidase (complex IV, CIV), that cooperate to transfer electrons derived from NADH and succinate to molecular oxygen, creating an electrochemical gradient over the inner membrane that drives transmembrane transport and the ATP synthase. Cytochrome c oxidase is the component of the respiratory chain that catalyzes the reduction of oxygen to water. Electrons originating from reduced cytochrome c in the intermembrane space (IMS) are transferred via the dinuclear copper A center (CU(A)) of subunit 2 and heme A of subunit 1 to the active site in subunit 1, a binuclear center (BNC) formed by heme A3 and copper B (CU(B)). The BNC reduces molecular oxygen to 2 water molecules using 4 electrons from cytochrome c in the IMS and 4 protons from the mitochondrial matrix. This chain is Cytochrome c oxidase polypeptide VIII, mitochondrial (cox8), found in Schizosaccharomyces pombe (strain 972 / ATCC 24843) (Fission yeast).